The chain runs to 216 residues: UPF0193 protein EVG1 homolog (216 aa).

It belongs to the UPF0193 (EVG1) family.

The sequence is that of UPF0193 protein EVG1 homolog from Mus musculus (Mouse).